Consider the following 286-residue polypeptide: tRNA (guanine-N(7)-)-methyltransferase (286 aa).

S-adenosyl-L-methionine-binding positions include G103, 126-127 (EI), 161-162 (NA), and C181. The active site involves D184. Residue 259–261 (TEE) participates in S-adenosyl-L-methionine binding.

The protein belongs to the class I-like SAM-binding methyltransferase superfamily. TrmB family. Forms a complex with TRM82.

Its subcellular location is the nucleus. The catalysed reaction is guanosine(46) in tRNA + S-adenosyl-L-methionine = N(7)-methylguanosine(46) in tRNA + S-adenosyl-L-homocysteine. It participates in tRNA modification; N(7)-methylguanine-tRNA biosynthesis. Its function is as follows. Catalyzes the formation of N(7)-methylguanine at position 46 (m7G46) in tRNA. The sequence is that of tRNA (guanine-N(7)-)-methyltransferase from Vanderwaltozyma polyspora (strain ATCC 22028 / DSM 70294 / BCRC 21397 / CBS 2163 / NBRC 10782 / NRRL Y-8283 / UCD 57-17) (Kluyveromyces polysporus).